A 306-amino-acid chain; its full sequence is Arylesterase (306 aa).

The Involved in the stabilization of the negatively charged intermediate by the formation of the oxyanion hole motif lies at 82-84 (HGG). Catalysis depends on residues serine 156, aspartate 251, and histidine 281.

As to quaternary structure, monomer.

The enzyme catalyses a phenyl acetate + H2O = a phenol + acetate + H(+). It carries out the reaction An aryl dialkyl phosphate + H2O = dialkyl phosphate + an aryl alcohol.. With respect to regulation, completely inhibited by chemical modifiers that are specific to Cys (HgCl(2) and p-chloromercuribenzoic acid), His (diethyl pyrocarbonate) and Ser (diisopropyl fluorophosphate and phenylmethanesulfonyl fluoride). No significant effect with chemical modifiers specific to Lys (pyridoxal 5'-phosphate) and Arg (phenylglyoxal). Not inhibited by inhibitors of A-esterases (paraoxon) or C-esterases (physostigmine/eserine). Activity is also not effected by incubation with 5 mM divalent cations for 30 minutes at 30 degrees Celsius or with 10 mM EDTA for 60 minutes at 75 degrees Celsius. In terms of biological role, has a broad substrate specificity. Hydrolyzes various p-nitrophenyl phosphates, aromatic esters and p-nitrophenyl fatty acids in vitro. Most active against paraoxon, phenyl acetate and p-nitrophenyl caproate (C6), respectively. Also has tributyrinase activity, but shows no hydrolytic activity toward other triacylglycerols including tricaprylin, trimyristin, tripalmitin or triolein in vitro. In Saccharolobus solfataricus (Sulfolobus solfataricus), this protein is Arylesterase.